Consider the following 134-residue polypeptide: Small ribosomal subunit protein bS6 (134 aa).

The segment at 97–134 (TDVSPIKASEGREDRRSAPQREERNHDNSDEVSEESED) is disordered. The span at 105 to 125 (SEGREDRRSAPQREERNHDNS) shows a compositional bias: basic and acidic residues.

This sequence belongs to the bacterial ribosomal protein bS6 family.

Its function is as follows. Binds together with bS18 to 16S ribosomal RNA. In Marinomonas sp. (strain MWYL1), this protein is Small ribosomal subunit protein bS6.